We begin with the raw amino-acid sequence, 419 residues long: MSVEVDFVDKKEVHLRTLKQSGHVGFDSLPDQLVNKSVQNGFVFNVMCIGETGLGKSTLMDTLFNTSFESTPSPHTLPSVKLKAHTYELQESNVRLKLTICDTVGYGDQINKDDSFKAVVDYIDAQFENYLQEELKIKRSLVTCHDSRIHICLYFICPTGHGLKSLDLVCMKKLDSKVNIIPVIAKADTISKVELQRFKAKIIQELNANGVHIYQFPTDDETVAETNTSMNSHIPFAVVGSTEFIKVGNKLIRARQYPWGTVQVENETHCDFVKLREMLIRTNMEDMREKTHTRHYELYRQKRLEQMGFSDVDSDNKPISFQQTFEAKRSNHLAELQSKEEEVRQMFVQRVKEKEAELKESEKDLHAKFEKLKRDHAEEKRKLEESRKALEEDYLDFQRRKQQLATAHHTLTLGKSKKK.

The region spanning 40–306 (NGFVFNVMCI…ELYRQKRLEQ (267 aa)) is the Septin-type G domain. The interval 50-57 (GETGLGKS) is G1 motif. GTP is bound by residues 50–57 (GETGLGKS), Ser-79, Gly-105, 186–194 (KADTISKVE), Gly-240, and Arg-255. The tract at residues 102-105 (DTVG) is G3 motif. The tract at residues 185 to 188 (AKAD) is G4 motif. Residues 259–269 (WGTVQVENETH) form an important for dimerization region.

The protein belongs to the TRAFAC class TrmE-Era-EngA-EngB-Septin-like GTPase superfamily. Septin GTPase family. In terms of assembly, may assemble into a multicomponent structure.

The protein localises to the cytoplasm. It localises to the cytoskeleton. Its subcellular location is the spindle. Its function is as follows. Involved in cytokinesis. The chain is Septin-2 from Drosophila melanogaster (Fruit fly).